Consider the following 283-residue polypeptide: 4-diphosphocytidyl-2-C-methyl-D-erythritol kinase (283 aa).

Lys-10 is a catalytic residue. ATP is bound at residue 99–109 (PMGGGLGGGSS). Asp-141 is a catalytic residue.

It belongs to the GHMP kinase family. IspE subfamily. Homodimer.

The enzyme catalyses 4-CDP-2-C-methyl-D-erythritol + ATP = 4-CDP-2-C-methyl-D-erythritol 2-phosphate + ADP + H(+). It participates in isoprenoid biosynthesis; isopentenyl diphosphate biosynthesis via DXP pathway; isopentenyl diphosphate from 1-deoxy-D-xylulose 5-phosphate: step 3/6. Catalyzes the phosphorylation of the position 2 hydroxy group of 4-diphosphocytidyl-2C-methyl-D-erythritol. The polypeptide is 4-diphosphocytidyl-2-C-methyl-D-erythritol kinase (Shigella boydii serotype 18 (strain CDC 3083-94 / BS512)).